The primary structure comprises 182 residues: Nascent polypeptide-associated complex subunit alpha (182 aa).

Residues Asn17–Ile81 enclose the NAC-A/B domain. Positions Ala120–Asp148 are disordered. Acidic residues predominate over residues Ala131–Glu141. The UBA domain maps to Ile144 to Ser182.

It belongs to the NAC-alpha family. Part of the nascent polypeptide-associated complex (NAC), consisting of EGD2 and EGD1. NAC associates with ribosomes via EGD1.

The protein localises to the cytoplasm. It is found in the nucleus. Functionally, component of the nascent polypeptide-associated complex (NAC), a dynamic component of the ribosomal exit tunnel, protecting the emerging polypeptides from interaction with other cytoplasmic proteins to ensure appropriate nascent protein targeting. The NAC complex also promotes mitochondrial protein import by enhancing productive ribosome interactions with the outer mitochondrial membrane and blocks the inappropriate interaction of ribosomes translating non-secretory nascent polypeptides with translocation sites in the membrane of the endoplasmic reticulum. EGD2 may also be involved in transcription regulation. The polypeptide is Nascent polypeptide-associated complex subunit alpha (EGD2) (Lodderomyces elongisporus (strain ATCC 11503 / CBS 2605 / JCM 1781 / NBRC 1676 / NRRL YB-4239) (Yeast)).